Here is a 571-residue protein sequence, read N- to C-terminus: Germacrene B synthase TPS16CC (571 aa).

Arg-287, Asp-324, Asp-328, Arg-465, and Asp-468 together coordinate (2E,6E)-farnesyl diphosphate. Residues Asp-324 and Asp-328 each contribute to the Mg(2+) site. A DDXXD motif motif is present at residues 324 to 328 (DDIYD). Residues Asp-468, Ser-472, and Glu-476 each contribute to the Mg(2+) site.

This sequence belongs to the terpene synthase family. Tpsb subfamily. Mg(2+) serves as cofactor. The cofactor is Mn(2+). Highly expressed in glandular trichomes.

It catalyses the reaction (2E,6E)-farnesyl diphosphate = (1E,4E)-germacrene B + diphosphate. Its pathway is secondary metabolite biosynthesis; terpenoid biosynthesis. Its function is as follows. Involved in sesquiterpene olefins biosynthesis, constituants of cannabinoids and terpenoids-rich resins. Catalyzes mainly the conversion of (2E)-farnesyl diphosphate to germacrene B, which is spontaneously converted to gamma-elemene as a thermal degradation product. The polypeptide is Germacrene B synthase TPS16CC (Cannabis sativa (Hemp)).